Consider the following 1755-residue polypeptide: Transposon Ty1-LR3 Gag-Pol polyprotein (1755 aa).

Over residues 1-16 the composition is skewed to low complexity; that stretch reads MESQQLSQHSHISHGS. Disordered stretches follow at residues 1 to 93, 126 to 173, and 352 to 421; these read MESQ…MMTQ, PQSQ…RPPP, and GSRN…SKST. Polar residues-rich tracts occupy residues 48–60 and 127–152; these read TKAN…TPAS and QSQF…GNTF. The span at 153 to 165 shows a compositional bias: low complexity; that stretch reads TDSSSADSDMTST. Residues 299–401 are RNA-binding; that stretch reads NNGIHINNKV…NSKSKTARAH (103 aa). Residues 402–418 show a composition bias toward low complexity; the sequence is NVSTSNNSPSTDNDSIS. S416 bears the Phosphoserine mark. D461 (for protease activity; shared with dimeric partner) is an active-site residue. The segment at 583–640 is integrase-type zinc finger-like; it reads NVHTSESTRKYPYPFIHRMLAHANAQTIRYSLKNNTITYFNESDVDWSSAIDYQCPDC. Positions 660-829 constitute an Integrase catalytic domain; sequence NSYEPFQYLH…SQHAGLAGLD (170 aa). D671 and D736 together coordinate Mg(2+). 3 disordered regions span residues 956–1087, 1092–1111, and 1129–1172; these read SKAV…ETEK, RSPS…NIVP, and ADLP…SNAY. The segment covering 960–969 has biased composition (low complexity); sequence SPTDSTPPST. Over residues 1005-1015 the composition is skewed to polar residues; that stretch reads STPQISNIEST. The span at 1038–1052 shows a compositional bias: basic and acidic residues; that stretch reads ESSHASKSKDFRHSD. 2 stretches are compositionally biased toward polar residues: residues 1053–1082 and 1101–1111; these read SYSN…QISD and PENNSSHNIVP. The Bipartite nuclear localization signal motif lies at 1178-1212; the sequence is KKRSLEDNETEIKVSRDTWNTKNMRSLEPPRSKKR. The 139-residue stretch at 1338-1476 folds into the Reverse transcriptase Ty1/copia-type domain; it reads NNYYITQLDI…DILGLEIKYQ (139 aa). Residues D1346, D1427, D1428, D1610, E1652, and D1685 each contribute to the Mg(2+) site. The RNase H Ty1/copia-type domain occupies 1610 to 1752; that stretch reads DASYGNQPYY…IKTFKLLTNK (143 aa).

The capsid protein forms a homotrimer, from which the VLPs are assembled. The protease is a homodimer, whose active site consists of two apposed aspartic acid residues. Initially, virus-like particles (VLPs) are composed of the structural unprocessed proteins Gag and Gag-Pol, and also contain the host initiator methionine tRNA (tRNA(i)-Met) which serves as a primer for minus-strand DNA synthesis, and a dimer of genomic Ty RNA. Processing of the polyproteins occurs within the particle and proceeds by an ordered pathway, called maturation. First, the protease (PR) is released by autocatalytic cleavage of the Gag-Pol polyprotein yielding capsid protein p45 and a Pol-p154 precursor protein. This cleavage is a prerequisite for subsequent processing of Pol-p154 at the remaining sites to release the mature structural and catalytic proteins. Maturation takes place prior to the RT reaction and is required to produce transposition-competent VLPs.

The protein resides in the cytoplasm. The protein localises to the nucleus. It carries out the reaction DNA(n) + a 2'-deoxyribonucleoside 5'-triphosphate = DNA(n+1) + diphosphate. It catalyses the reaction Endonucleolytic cleavage to 5'-phosphomonoester.. Its function is as follows. Capsid protein (CA) is the structural component of the virus-like particle (VLP), forming the shell that encapsulates the retrotransposons dimeric RNA genome. The particles are assembled from trimer-clustered units and there are holes in the capsid shells that allow for the diffusion of macromolecules. CA also has nucleocapsid-like chaperone activity, promoting primer tRNA(i)-Met annealing to the multipartite primer-binding site (PBS), dimerization of Ty1 RNA and initiation of reverse transcription. The aspartyl protease (PR) mediates the proteolytic cleavages of the Gag and Gag-Pol polyproteins after assembly of the VLP. In terms of biological role, reverse transcriptase/ribonuclease H (RT) is a multifunctional enzyme that catalyzes the conversion of the retro-elements RNA genome into dsDNA within the VLP. The enzyme displays a DNA polymerase activity that can copy either DNA or RNA templates, and a ribonuclease H (RNase H) activity that cleaves the RNA strand of RNA-DNA heteroduplexes during plus-strand synthesis and hydrolyzes RNA primers. The conversion leads to a linear dsDNA copy of the retrotransposon that includes long terminal repeats (LTRs) at both ends. Functionally, integrase (IN) targets the VLP to the nucleus, where a subparticle preintegration complex (PIC) containing at least integrase and the newly synthesized dsDNA copy of the retrotransposon must transit the nuclear membrane. Once in the nucleus, integrase performs the integration of the dsDNA into the host genome. This is Transposon Ty1-LR3 Gag-Pol polyprotein (TY1B-LR3) from Saccharomyces cerevisiae (strain ATCC 204508 / S288c) (Baker's yeast).